The following is a 476-amino-acid chain: Protein transport protein Sec61 subunit alpha (476 aa).

The Cytoplasmic portion of the chain corresponds to 2–33 (GIKFLEVIKPFCAVLPEIQKPERKIQFREKVL). The helical transmembrane segment at 34–53 (WTAITLFIFLVCCQIPLFGI) threads the bilayer. Topologically, residues 54–76 (MSSDSADPFYWMRVILASNRGTL) are lumenal. The helical transmembrane segment at 77-96 (MELGISPIVTSGLIMQLLAG) threads the bilayer. The Cytoplasmic portion of the chain corresponds to 97 to 117 (AKIIEVGDTPKDRALFNGAQK). Residues 118 to 138 (LFGMIITIGQAIVYVMTGMYG) form a helical membrane-spanning segment. Topologically, residues 139–144 (DPSEMG) are lumenal. Residues 145-165 (AGICLLIIIQLFVAGLIVLLL) form a helical membrane-spanning segment. The Cytoplasmic portion of the chain corresponds to 166 to 172 (DELLQKG). The helical transmembrane segment at 173–193 (YGLGSGISLFIATNICETIVW) threads the bilayer. The Lumenal segment spans residues 194–240 (KAFSPTTVNTGRGTEFEGAIIALFHLLATRTDKVRALREAFYRQNLP). Residues 241–261 (NILNLIATVFVFAVVIYFQGF) form a helical membrane-spanning segment. The Cytoplasmic portion of the chain corresponds to 262–288 (RVDLPIKSARYRGQYNTYPIKLFYTSN). Residues 289 to 309 (IPIILQSALVSNLYVISQMLS) traverse the membrane as a helical segment. At 310 to 354 (TRFSGNFLVNLLGTWSDATSGGPARAYPVAGLCYYLSPPESFGSV) the chain is on the lumenal side. A helical membrane pass occupies residues 355 to 375 (LDDPVHAAIYIVFMLGSCAFF). The Cytoplasmic portion of the chain corresponds to 376–420 (SKTWIEVSGSSAKDVAKQLKEQQMVMRGHRETSMVHELNRYIPTA). The helical transmembrane segment at 421-441 (AAFGGLCIGGLSVMADFLGAI) threads the bilayer. The Lumenal segment spans residues 442–445 (GSGT). A helical membrane pass occupies residues 446-462 (GILLAVTIIYQYFEIFV). At 463-476 (KEQSEMGSMGALLF) the chain is on the cytoplasmic side.

It belongs to the SecY/SEC61-alpha family. As to quaternary structure, the SEC61 channel-forming translocon complex consists of channel-forming core components SEC61A1, SEC61B and SEC61G and different auxiliary components such as SEC62 and SEC63. The SEC61 channel associates with the multi-pass translocon (MPT) complex.

Its subcellular location is the endoplasmic reticulum membrane. Its function is as follows. Component of SEC61 channel-forming translocon complex that mediates transport of signal peptide-containing precursor polypeptides across the endoplasmic reticulum (ER). Forms a ribosome receptor and a gated pore in the ER membrane, both functions required for cotranslational translocation of nascent polypeptides. May cooperate with auxiliary protein SEC62, SEC63 and HSPA5/BiP to enable post-translational transport of small presecretory proteins. The SEC61 channel is also involved in ER membrane insertion of transmembrane proteins: it mediates membrane insertion of the first few transmembrane segments of proteins, while insertion of subsequent transmembrane regions of multi-pass membrane proteins is mediated by the multi-pass translocon (MPT) complex. In Dissostichus mawsoni (Antarctic cod), this protein is Protein transport protein Sec61 subunit alpha (sec61a).